Here is a 469-residue protein sequence, read N- to C-terminus: MSAVITPADFNDYKVADISLAAWGRRETIIAESEMPALMGLRRKYASEQPLKGAKILGCIHMTIQTAVLIETLVALGAEVRWSSCNIFSTQDQAAASIAAAGIPVFAWKGETEEEYEWCLEQTILKDGQPWDANMILDDGGDLTELLHKKYPQVLDRVHGVTEETTTGVHRLLDMLAKGELKIPAINVNDSVTKSKNDNKYGCRHSLNDAIKRGTDHLLSGKQALVIGYGDVGKGSAQSLRQEGMIVKVSEVDPICAMQACMDGFELVSPFIDGINDGTEASIDKALLGKIDLIVTTTGNVNVCDANMLKALKKRAVVCNIGHFDNEIDTAFMRKNWAWEEVKPQVHKIHRTGAGSFDPQNDDYLILLAEGRLVNLGNATGHPSRIMDGSFANQVLAQIFLFGQKYADLSPAQKAERLTVEVLPKKLDEEVALEMVRGFGGVVTQLTKQQADYIGVTVEGPFKPHAYRY.

Substrate contacts are provided by threonine 63, aspartate 139, and glutamate 164. NAD(+) is bound at residue 165–167 (TTT). Residues lysine 194 and aspartate 198 each contribute to the substrate site. NAD(+) is bound by residues asparagine 199, 228–233 (GYGDVG), glutamate 251, asparagine 300, 321–323 (IGH), and asparagine 375.

It belongs to the adenosylhomocysteinase family. Requires NAD(+) as cofactor.

Its subcellular location is the cytoplasm. The enzyme catalyses S-adenosyl-L-homocysteine + H2O = L-homocysteine + adenosine. It functions in the pathway amino-acid biosynthesis; L-homocysteine biosynthesis; L-homocysteine from S-adenosyl-L-homocysteine: step 1/1. Functionally, may play a key role in the regulation of the intracellular concentration of adenosylhomocysteine. This is Adenosylhomocysteinase from Pseudomonas fluorescens (strain Pf0-1).